The following is a 217-amino-acid chain: 2-phospho-L-lactate guanylyltransferase (217 aa).

This sequence belongs to the CofC family. Homodimer.

The enzyme catalyses (2S)-2-phospholactate + GTP + H(+) = (2S)-lactyl-2-diphospho-5'-guanosine + diphosphate. Its pathway is cofactor biosynthesis; coenzyme F420 biosynthesis. Functionally, guanylyltransferase that catalyzes the activation of (2S)-2-phospholactate (2-PL) as (2S)-lactyl-2-diphospho-5'-guanosine, via the condensation of 2-PL with GTP. It is involved in the biosynthesis of coenzyme F420, a hydride carrier cofactor. This chain is 2-phospho-L-lactate guanylyltransferase, found in Methanospirillum hungatei JF-1 (strain ATCC 27890 / DSM 864 / NBRC 100397 / JF-1).